Here is a 407-residue protein sequence, read N- to C-terminus: Resuscitation-promoting factor RpfA (407 aa).

Residues 1–33 (MSGRHRKPTTSNVSVAKIAFTGAVLGGGGIAMA) form the signal peptide. Disordered regions lie at residues 142-253 (VNGE…ADLA) and 271-371 (LPAA…AETP). Over residues 148–159 (PLAPPPADPAPP) the composition is skewed to pro residues. The segment covering 160–170 (VELAANDLPAP) has biased composition (low complexity). Pro residues predominate over residues 171-193 (LGEPLPAAPADPAPPADLAPPAP). 2 tandem repeats follow at residues 178-185 (APADPAPP) and 186-193 (ADLAPPAP). The tract at residues 178-359 (APADPAPPAD…PDPQPADAPP (182 aa)) is 12 X 8 AA approximate repeats of A-P-A-D-L-A-P-P. Low complexity predominate over residues 194–210 (ADVAPPVELAVNDLPAP). Positions 211 to 249 (LGEPLPAAPADPAPPADLAPPAPADLAPPAPADLAPPAP) are enriched in pro residues. 10 consecutive repeat copies span residues 218 to 225 (APADPAPP), 226 to 233 (ADLAPPAP), 240 to 247 (APADLAPP), 248 to 255 (APADLAPP), 274 to 281 (APAELAPP), 287 to 294 (ASADLAPP), 295 to 302 (APADLAPP), 303 to 310 (APAELAPP), 311 to 318 (APADLAPP), and 353 to 359 (QPADAPP). Residues 274 to 292 (APAELAPPADLAPASADLA) show a composition bias toward low complexity. Pro residues-rich tracts occupy residues 293–312 (PPAP…PPAP) and 350–361 (PDPQPADAPPPG).

This sequence belongs to the transglycosylase family. Rpf subfamily.

Factor that stimulates resuscitation of dormant cells. Has peptidoglycan (PG) hydrolytic activity. The chain is Resuscitation-promoting factor RpfA (rpfA) from Mycobacterium tuberculosis (strain CDC 1551 / Oshkosh).